A 219-amino-acid polypeptide reads, in one-letter code: Adenylate kinase (219 aa).

An ATP-binding site is contributed by 10–15; that stretch reads GAGKGT. Residues 30-59 are NMP; that stretch reads STGDMLRAAIREGTELGLKAKSVMESGGLV. Residues T31, R36, 57-59, 85-88, and Q92 contribute to the AMP site; these read GLV and GFPR. The tract at residues 122–159 is LID; that stretch reads GRRQHPASGRVYHIEYNPPKVEGKDDVTGEELVQRPDD. ATP contacts are provided by residues R123 and 132–133; that span reads VY. AMP contacts are provided by R156 and R167. R202 is a binding site for ATP.

It belongs to the adenylate kinase family. Monomer.

The protein localises to the cytoplasm. It carries out the reaction AMP + ATP = 2 ADP. It functions in the pathway purine metabolism; AMP biosynthesis via salvage pathway; AMP from ADP: step 1/1. In terms of biological role, catalyzes the reversible transfer of the terminal phosphate group between ATP and AMP. Plays an important role in cellular energy homeostasis and in adenine nucleotide metabolism. The chain is Adenylate kinase from Acinetobacter baylyi (strain ATCC 33305 / BD413 / ADP1).